The sequence spans 361 residues: Mitogen-activated protein kinase 14A (361 aa).

The Protein kinase domain occupies 25–309 (YQNLSPVGSG…AAEALAHPYF (285 aa)). Residues 31-39 (VGSGAYGSV) and Lys54 each bind ATP. Asp169 serves as the catalytic Proton acceptor. A Phosphothreonine; by MAP2K3 modification is found at Thr181. A TXY motif is present at residues 181 to 183 (TGY). Tyr183 bears the Phosphotyrosine; by MAP2K3 mark.

This sequence belongs to the protein kinase superfamily. CMGC Ser/Thr protein kinase family. MAP kinase subfamily. The cofactor is Mg(2+). Dually phosphorylated on Thr-181 and Tyr-183, which activates the enzyme.

It is found in the cytoplasm. It localises to the nucleus. The catalysed reaction is L-seryl-[protein] + ATP = O-phospho-L-seryl-[protein] + ADP + H(+). It carries out the reaction L-threonyl-[protein] + ATP = O-phospho-L-threonyl-[protein] + ADP + H(+). Its activity is regulated as follows. Activated by threonine and tyrosine phosphorylation by the dual specificity kinase, MKK3. Its function is as follows. Serine/threonine kinase which acts as an essential component of the MAP kinase signal transduction pathway. Mapk14a is one of the four p38 MAPKs which play an important role in the cascades of cellular responses evoked by extracellular stimuli such as pro-inflammatory cytokines or physical stress leading to direct activation of transcription factors. Accordingly, p38 MAPKs phosphorylate a broad range of proteins and it has been estimated that they may have approximately 200 to 300 substrates each. Some of the targets are downstream kinases which are activated through phosphorylation and further phosphorylate additional targets. Required for cytokinesis on the future dorsal side of the blastodisc, suggesting a role in symmetrical and synchronous blastomere cleavage. This is Mitogen-activated protein kinase 14A (mapk14a) from Danio rerio (Zebrafish).